Reading from the N-terminus, the 316-residue chain is Cytochrome c biogenesis protein CcsA (316 aa).

8 helical membrane passes run 12–32 (HISLSIILIVITIFLMNLLVY), 44–64 (GMVASFLCITGLLVIRWIYSG), 71–91 (LYESLMFLSWSFSIFYMIPYF), 98–118 (LNVLTAPGTIFTQGFATSGVL), 145–165 (LSYAALLCGSLLSVALLVILF), 222–242 (VISLGFLFLTIGILSGAVWAN), 256–270 (TWAFITWTIFAIYLH), and 283–303 (AIVASIGFFIIWICYFGVNLL).

The protein belongs to the CcmF/CycK/Ccl1/NrfE/CcsA family. As to quaternary structure, may interact with Ccs1.

The protein resides in the plastid. It localises to the chloroplast thylakoid membrane. Functionally, required during biogenesis of c-type cytochromes (cytochrome c6 and cytochrome f) at the step of heme attachment. This chain is Cytochrome c biogenesis protein CcsA, found in Ranunculus macranthus (Large buttercup).